Here is a 142-residue protein sequence, read N- to C-terminus: Universal stress protein D (142 aa).

Belongs to the universal stress protein A family.

The protein localises to the cytoplasm. Its function is as follows. Required for resistance to DNA-damaging agents. This is Universal stress protein D (uspD) from Escherichia coli (strain K12).